A 420-amino-acid chain; its full sequence is Putative sporulation-specific glycosylase YdhD (420 aa).

LysM domains follow at residues 2–45 (FIHI…ALLI) and 48–92 (YVYT…KITI). Residues 100-420 (AGTLSFYVLR…LRKFFTIRKV (321 aa)) enclose the GH18 domain. The Proton donor role is filled by Glu-212.

The protein belongs to the glycosyl hydrolase 18 family. Chitinase class II subfamily.

The protein localises to the spore wall. This Bacillus subtilis (strain 168) protein is Putative sporulation-specific glycosylase YdhD (ydhD).